A 277-amino-acid chain; its full sequence is (-)-trans-carveol dehydrogenase (277 aa).

Leu-10–Asp-32 provides a ligand contact to NAD(+). Ser-156 lines the substrate pocket. Catalysis depends on Tyr-169, which acts as the Proton acceptor.

This sequence belongs to the short-chain dehydrogenases/reductases (SDR) family. As to quaternary structure, homotetramer.

It catalyses the reaction (1S,5R)-carveol + NAD(+) = (R)-carvone + NADH + H(+). The enzyme catalyses (1S,5S)-carveol + NAD(+) = (S)-carvone + NADH + H(+). It participates in terpene metabolism; limonene degradation. Its activity is regulated as follows. Competitively inhibited by the product (S)- or (R)-carvone. Catalyzes the oxidation of carveol to carvone, with a strong stereoselectivity since it efficiently converts only the (6S)-stereoisomers, of which (-)-(4R,6S)-trans-carveol is the better substrate. Displays a broad substrate specificity with a preference for substituted cyclohexanols, and does not catalyze the oxidation of primary or short chain aliphatic secondary alcohols. Is also able, albeit more slowly, to oxidize limonene-1,2-diol into 1-hydroxy-2-oxolimonene. The chain is (-)-trans-carveol dehydrogenase (limC) from Rhodococcus erythropolis (Arthrobacter picolinophilus).